Consider the following 379-residue polypeptide: Anhydro-N-acetylmuramic acid kinase (379 aa).

Residue 9–16 (GTSADGVD) coordinates ATP.

This sequence belongs to the anhydro-N-acetylmuramic acid kinase family.

The enzyme catalyses 1,6-anhydro-N-acetyl-beta-muramate + ATP + H2O = N-acetyl-D-muramate 6-phosphate + ADP + H(+). Its pathway is amino-sugar metabolism; 1,6-anhydro-N-acetylmuramate degradation. It functions in the pathway cell wall biogenesis; peptidoglycan recycling. Its function is as follows. Catalyzes the specific phosphorylation of 1,6-anhydro-N-acetylmuramic acid (anhMurNAc) with the simultaneous cleavage of the 1,6-anhydro ring, generating MurNAc-6-P. Is required for the utilization of anhMurNAc either imported from the medium or derived from its own cell wall murein, and thus plays a role in cell wall recycling. The polypeptide is Anhydro-N-acetylmuramic acid kinase (Prochlorococcus marinus (strain MIT 9303)).